A 22-amino-acid polypeptide reads, in one-letter code: Peptide PGLa-R1 (22 aa).

Leucine 22 carries the leucine amide modification.

As to expression, expressed by the skin glands.

The protein localises to the secreted. Its function is as follows. Antimicrobial peptide. This is Peptide PGLa-R1 from Xenopus ruwenzoriensis (Uganda clawed frog).